Reading from the N-terminus, the 148-residue chain is Large ribosomal subunit protein bL9 (148 aa).

This sequence belongs to the bacterial ribosomal protein bL9 family.

Its function is as follows. Binds to the 23S rRNA. This chain is Large ribosomal subunit protein bL9, found in Pseudomonas putida (strain W619).